The sequence spans 165 residues: Phosphopantetheine adenylyltransferase (165 aa).

Residue Ser-10 participates in substrate binding. ATP-binding positions include 10 to 11 (SF) and His-18. Substrate-binding residues include Lys-42, Leu-74, and Arg-88. ATP contacts are provided by residues 89–91 (GLR), Glu-99, and 124–130 (YSFLSSS).

Belongs to the bacterial CoaD family. Homohexamer. Mg(2+) is required as a cofactor.

The protein localises to the cytoplasm. It catalyses the reaction (R)-4'-phosphopantetheine + ATP + H(+) = 3'-dephospho-CoA + diphosphate. Its pathway is cofactor biosynthesis; coenzyme A biosynthesis; CoA from (R)-pantothenate: step 4/5. Reversibly transfers an adenylyl group from ATP to 4'-phosphopantetheine, yielding dephospho-CoA (dPCoA) and pyrophosphate. The protein is Phosphopantetheine adenylyltransferase of Anoxybacillus flavithermus (strain DSM 21510 / WK1).